Here is a 360-residue protein sequence, read N- to C-terminus: SVP1-like protein 2 (360 aa).

3 WD repeats span residues 12–50 (AHEP…LRMK), 191–231 (AHKS…LRFE), and 236–275 (LDRA…PQPE).

This sequence belongs to the WD repeat PROPPIN family.

Its subcellular location is the vacuole membrane. It localises to the cytoplasmic vesicle membrane. In terms of biological role, involved in mitochondrial or peroxisomal functions and amino acid signaling pathways. The sequence is that of SVP1-like protein 2 (HSV2) from Pichia angusta (Yeast).